Here is a 268-residue protein sequence, read N- to C-terminus: 4-hydroxy-tetrahydrodipicolinate reductase (268 aa).

NAD(+)-binding positions include 7 to 12 (GAGGRM) and Glu-33. Arg-34 serves as a coordination point for NADP(+). NAD(+) is bound by residues 97-99 (GTT) and 121-124 (SGNM). The active-site Proton donor/acceptor is His-155. Residue His-156 coordinates (S)-2,3,4,5-tetrahydrodipicolinate. The Proton donor role is filled by Lys-159. Residue 165–166 (GT) coordinates (S)-2,3,4,5-tetrahydrodipicolinate.

It belongs to the DapB family.

Its subcellular location is the cytoplasm. The enzyme catalyses (S)-2,3,4,5-tetrahydrodipicolinate + NAD(+) + H2O = (2S,4S)-4-hydroxy-2,3,4,5-tetrahydrodipicolinate + NADH + H(+). It catalyses the reaction (S)-2,3,4,5-tetrahydrodipicolinate + NADP(+) + H2O = (2S,4S)-4-hydroxy-2,3,4,5-tetrahydrodipicolinate + NADPH + H(+). The protein operates within amino-acid biosynthesis; L-lysine biosynthesis via DAP pathway; (S)-tetrahydrodipicolinate from L-aspartate: step 4/4. Catalyzes the conversion of 4-hydroxy-tetrahydrodipicolinate (HTPA) to tetrahydrodipicolinate. The chain is 4-hydroxy-tetrahydrodipicolinate reductase from Brucella abortus (strain 2308).